Consider the following 434-residue polypeptide: Ataxin-10 homolog (434 aa).

It belongs to the ataxin-10 family.

It is found in the cytoplasm. The protein localises to the nucleus. Its function is as follows. May play a role in the regulation of cytokinesis. The sequence is that of Ataxin-10 homolog (mug160) from Schizosaccharomyces pombe (strain 972 / ATCC 24843) (Fission yeast).